The following is a 227-amino-acid chain: Killer cell lectin-like receptor subfamily B member 1A (227 aa).

Residues 1 to 45 (MDTARVYFGLKPPRTPGAWHESPPSLPPDACRCPRSHRLALKLSC) are Cytoplasmic-facing. Positions 31–34 (CRCP) match the LCK-binding motif motif. Residues 46–66 (AGLILLVVTLIGMSVLVRVLI) traverse the membrane as a helical; Signal-anchor for type II membrane protein segment. Topologically, residues 67–227 (QKPSIEKCYV…TLSNYVGYGH (161 aa)) are extracellular. A C-type lectin domain is found at 93–212 (ECPQDWLSHR…NSDNRWICQK (120 aa)). 3 disulfide bridges follow: cysteine 94/cysteine 105, cysteine 122/cysteine 210, and cysteine 189/cysteine 202.

In terms of assembly, homodimer; disulfide-linked. Interacts with tyrosine kinase LCK. As to expression, expressed in natural killer cells.

Its subcellular location is the membrane. Its function is as follows. Plays a stimulatory role on natural killer (NK) cell cytotoxicity. The chain is Killer cell lectin-like receptor subfamily B member 1A (Klrb1a) from Mus musculus (Mouse).